Consider the following 429-residue polypeptide: Adenylosuccinate synthetase (429 aa).

GTP is bound by residues 12–18 and 40–42; these read GDEGKGK and GHT. D13 acts as the Proton acceptor in catalysis. D13 and G40 together coordinate Mg(2+). IMP contacts are provided by residues 13–16, 38–41, T128, R142, Q223, T238, and R302; these read DEGK and NAGH. The active-site Proton donor is H41. Position 298-304 (298-304) interacts with substrate; it reads TTTGRPR. GTP contacts are provided by residues R304, 330-332, and 412-414; these read SID and SVG.

It belongs to the adenylosuccinate synthetase family. In terms of assembly, homodimer. Mg(2+) serves as cofactor.

It localises to the cytoplasm. The enzyme catalyses IMP + L-aspartate + GTP = N(6)-(1,2-dicarboxyethyl)-AMP + GDP + phosphate + 2 H(+). The protein operates within purine metabolism; AMP biosynthesis via de novo pathway; AMP from IMP: step 1/2. Plays an important role in the de novo pathway of purine nucleotide biosynthesis. Catalyzes the first committed step in the biosynthesis of AMP from IMP. In Bacillus cereus (strain ATCC 14579 / DSM 31 / CCUG 7414 / JCM 2152 / NBRC 15305 / NCIMB 9373 / NCTC 2599 / NRRL B-3711), this protein is Adenylosuccinate synthetase.